The following is a 197-amino-acid chain: Probable GTP-binding protein EngB (197 aa).

The EngB-type G domain occupies 22-197 (TGVEVAFAGR…FKEKLDTWYQ (176 aa)). Residues 30–37 (GRSNAGKS), 57–61 (GRTQL), 75–78 (DLPG), 142–145 (TKAD), and 177–179 (FSS) contribute to the GTP site. The Mg(2+) site is built by Ser-37 and Thr-59.

The protein belongs to the TRAFAC class TrmE-Era-EngA-EngB-Septin-like GTPase superfamily. EngB GTPase family. Mg(2+) is required as a cofactor.

In terms of biological role, necessary for normal cell division and for the maintenance of normal septation. The protein is Probable GTP-binding protein EngB of Francisella tularensis subsp. holarctica (strain FTNF002-00 / FTA).